A 442-amino-acid polypeptide reads, in one-letter code: Probable carboxypeptidase PAAG_00768 (442 aa).

Positions 1-20 are cleaved as a signal peptide; that stretch reads MKLQYLVALLFVQAVPPVTA. Asn-102 is a glycosylation site (N-linked (GlcNAc...) asparagine). Asp-160 provides a ligand contact to Zn(2+). The Proton acceptor role is filled by Glu-192. Residue Glu-193 participates in Zn(2+) binding. A glycan (N-linked (GlcNAc...) asparagine) is linked at Asn-343.

It belongs to the peptidase M20A family. Zn(2+) serves as cofactor.

The protein localises to the secreted. This is Probable carboxypeptidase PAAG_00768 from Paracoccidioides lutzii (strain ATCC MYA-826 / Pb01) (Paracoccidioides brasiliensis).